The primary structure comprises 146 residues: Putative pre-16S rRNA nuclease (146 aa).

The protein belongs to the YqgF nuclease family.

It is found in the cytoplasm. Functionally, could be a nuclease involved in processing of the 5'-end of pre-16S rRNA. This Paraburkholderia xenovorans (strain LB400) protein is Putative pre-16S rRNA nuclease.